We begin with the raw amino-acid sequence, 360 residues long: Glutaminyl-peptide cyclotransferase (360 aa).

Positions 1–23 (MKYLKILIIVTIFFFLLINVINC) are cleaved as a signal peptide. N-linked (GlcNAc...) asparagine glycosylation occurs at Asn135. A Zn(2+)-binding site is contributed by Asp165. The active-site Proton acceptor is the Glu199. Position 200 (Glu200) interacts with Zn(2+). Asp251 (proton acceptor) is an active-site residue. Zn(2+) is bound at residue His330.

It belongs to the glutaminyl-peptide cyclotransferase family.

It is found in the secreted. It carries out the reaction N-terminal L-glutaminyl-[peptide] = N-terminal 5-oxo-L-prolyl-[peptide] + NH4(+). Responsible for the biosynthesis of pyroglutamyl peptides. Has a bias against acidic and tryptophan residues adjacent to the N-terminal glutaminyl residue and a lack of importance of chain length after the second residue. Also catalyzes N-terminal pyroglutamate formation. In Dictyostelium discoideum (Social amoeba), this protein is Glutaminyl-peptide cyclotransferase (qpct).